A 322-amino-acid chain; its full sequence is Arginase-1 (322 aa).

N6-succinyllysine is present on Lys-17. Residues Ser-62 and Ser-72 each carry the phosphoserine modification. An N6-succinyllysine modification is found at Lys-75. Mn(2+) contacts are provided by His-101, Asp-124, His-126, and Asp-128. Residues 126–130 and 137–139 each bind substrate; these read HTDIN and SGN. Ser-163 bears the Phosphoserine mark. Asp-183 contacts substrate. At Ser-217 the chain carries Phosphoserine. Positions 232 and 234 each coordinate Mn(2+). Substrate contacts are provided by Thr-246 and Glu-277.

Belongs to the arginase family. Homotrimer. Interacts with CMTM6. The cofactor is Mn(2+). As to expression, within the immune system initially reported to be selectively expressed in granulocytes (polymorphonuclear leukocytes [PMNs]). Also detected in macrophages mycobacterial granulomas. Expressed in group2 innate lymphoid cells (ILC2s) during lung disease.

Its subcellular location is the cytoplasm. It localises to the cytoplasmic granule. It catalyses the reaction L-arginine + H2O = urea + L-ornithine. It participates in nitrogen metabolism; urea cycle; L-ornithine and urea from L-arginine: step 1/1. Functionally, key element of the urea cycle converting L-arginine to urea and L-ornithine, which is further metabolized into metabolites proline and polyamides that drive collagen synthesis and bioenergetic pathways critical for cell proliferation, respectively; the urea cycle takes place primarily in the liver and, to a lesser extent, in the kidneys. In terms of biological role, functions in L-arginine homeostasis in nonhepatic tissues characterized by the competition between nitric oxide synthase (NOS) and arginase for the available intracellular substrate arginine. Arginine metabolism is a critical regulator of innate and adaptive immune responses. Involved in an antimicrobial effector pathway in polymorphonuclear granulocytes (PMN). Upon PMN cell death is liberated from the phagolysosome and depletes arginine in the microenvironment leading to suppressed T cell and natural killer (NK) cell proliferation and cytokine secretion. In group 2 innate lymphoid cells (ILC2s) promotes acute type 2 inflammation in the lung and is involved in optimal ILC2 proliferation but not survival. In humans, the immunological role in the monocytic/macrophage/dendritic cell (DC) lineage is unsure. The sequence is that of Arginase-1 (ARG1) from Homo sapiens (Human).